A 358-amino-acid chain; its full sequence is 4-hydroxy-2-oxovalerate aldolase 2 (358 aa).

The Pyruvate carboxyltransferase domain occupies 16–268 (VLLHDMCLRD…ETGVDLFKLM (253 aa)). Residue 24–25 (RD) coordinates substrate. Mn(2+) is bound at residue aspartate 25. Histidine 28 (proton acceptor) is an active-site residue. Residues serine 178 and histidine 207 each coordinate substrate. Mn(2+) contacts are provided by histidine 207 and histidine 209. Position 298 (tyrosine 298) interacts with substrate.

This sequence belongs to the 4-hydroxy-2-oxovalerate aldolase family.

The catalysed reaction is (S)-4-hydroxy-2-oxopentanoate = acetaldehyde + pyruvate. The sequence is that of 4-hydroxy-2-oxovalerate aldolase 2 from Methylibium petroleiphilum (strain ATCC BAA-1232 / LMG 22953 / PM1).